The primary structure comprises 415 residues: Heterogeneous nuclear ribonucleoprotein F (415 aa).

Met1 carries the N-acetylmethionine modification. Position 2 is an N-acetylmethionine; in Heterogeneous nuclear ribonucleoprotein F, N-terminally processed (Met2). One can recognise an RRM 1 domain in the interval 13 to 85 (VKLRGLPWSC…ESMGHRYIEV (73 aa)). Residue Lys72 forms a Glycyl lysine isopeptide (Lys-Gly) (interchain with G-Cter in SUMO) linkage. The segment at 81–86 (RYIEVF) is interaction with RNA. Lys87 participates in a covalent cross-link: Glycyl lysine isopeptide (Lys-Gly) (interchain with G-Cter in SUMO2). Ser104, Ser107, and Ser161 each carry phosphoserine. The RRM 2 domain maps to 111 to 188 (GFVRLRGLPF…RYIEVFKSSQ (78 aa)). A Glycyl lysine isopeptide (Lys-Gly) (interchain with G-Cter in SUMO2) cross-link involves residue Lys167. Positions 179–184 (RYIEVF) are interaction with RNA. Lys185 participates in a covalent cross-link: Glycyl lysine isopeptide (Lys-Gly) (interchain with G-Cter in SUMO2). Phosphoserine is present on residues Ser187, Ser193, and Ser195. Lys200 bears the N6-acetyllysine; alternate mark. Lys200 participates in a covalent cross-link: Glycyl lysine isopeptide (Lys-Gly) (interchain with G-Cter in SUMO2); alternate. Phosphothreonine is present on Thr215. Residue Lys224 is modified to N6-acetyllysine; alternate. A Glycyl lysine isopeptide (Lys-Gly) (interchain with G-Cter in SUMO2); alternate cross-link involves residue Lys224. Ser265 carries the phosphoserine modification. Residues 289–366 (HCVHMRGLPY…IELFLNSTTG (78 aa)) enclose the RRM 3 domain. The interaction with RNA stretch occupies residues 355 to 360 (RYIELF).

Identified in the spliceosome C complex. Interacts with AGO1, AGO2, TBP and TXNL4/DIM1. In terms of processing, sumoylated.

The protein localises to the nucleus. It localises to the nucleoplasm. Component of the heterogeneous nuclear ribonucleoprotein (hnRNP) complexes which provide the substrate for the processing events that pre-mRNAs undergo before becoming functional, translatable mRNAs in the cytoplasm. Plays a role in the regulation of alternative splicing events. Binds G-rich sequences in pre-mRNAs and keeps target RNA in an unfolded state. The polypeptide is Heterogeneous nuclear ribonucleoprotein F (HNRNPF) (Macaca fascicularis (Crab-eating macaque)).